We begin with the raw amino-acid sequence, 914 residues long: DENN domain-containing protein 2C (914 aa).

The disordered stretch occupies residues 46 to 98 (FGVRYNCHQESPPHKRPTGEERNGALPRNTDVKSRDQSEDEGEGGECRGSHPS). The segment covering 56–68 (SPPHKRPTGEERN) has biased composition (basic and acidic residues). S261 bears the Phosphoserine mark. A disordered region spans residues 411–446 (GKKRVKLQPYTGKEAPSSKGETSGNESDAEYLPKNR). A uDENN domain is found at 480–627 (ELFVVVSLQK…PFPAPGRTIT (148 aa)). Positions 649–782 (RLEHVDFECL…LQAALVQILE (134 aa)) constitute a cDENN domain. The 91-residue stretch at 784-874 (RDEVLAQEQQ…QDRELRQSGV (91 aa)) folds into the dDENN domain.

In terms of biological role, guanine nucleotide exchange factor (GEF) which may activate RAB9A and RAB9B. Promotes the exchange of GDP to GTP, converting inactive GDP-bound Rab proteins into their active GTP-bound form. The sequence is that of DENN domain-containing protein 2C (Dennd2c) from Mus musculus (Mouse).